Here is an 84-residue protein sequence, read N- to C-terminus: Dolichol phosphate-mannose biosynthesis regulatory protein (84 aa).

Helical transmembrane passes span 11 to 31 (FGLVAVSLIIFTYYTTWVILL) and 49 to 69 (YAVLIPLATGLLLLLFVGLFI).

It belongs to the DPM2 family. Component of the dolichol-phosphate mannose (DPM) synthase complex composed of DPM1, DPM2 and DPM3; in the complex interacts directly with DPM3. Component of the glycosylphosphatidylinositol-N-acetylglucosaminyltransferase (GPI-GnT) complex composed at least by PIGA, PIGC, PIGH, PIGP, PIGQ, PIGY and DPM2. Interacts with PIGA, PIGC and PIGQ.

It localises to the endoplasmic reticulum membrane. Its pathway is protein modification; protein glycosylation. Its function is as follows. Regulates the biosynthesis of dolichol phosphate-mannose. Regulatory subunit of the dolichol-phosphate mannose (DPM) synthase complex; essential for the ER localization and stable expression of DPM1. Part of the glycosylphosphatidylinositol-N-acetylglucosaminyltransferase (GPI-GnT) complex that catalyzes the transfer of N-acetylglucosamine from UDP-N-acetylglucosamine to phosphatidylinositol and participates in the first step of GPI biosynthesis. May act by regulating the GPI-GNT complex. This Cricetulus griseus (Chinese hamster) protein is Dolichol phosphate-mannose biosynthesis regulatory protein.